A 389-amino-acid polypeptide reads, in one-letter code: Glutaryl-CoA dehydrogenase (389 aa).

Residues arginine 87 and asparagine 91 each contribute to the substrate site. Residues 126 to 129 (FGIT), serine 135, and 159 to 161 (WIS) each bind FAD. Serine 135 contributes to the substrate binding site. Serine 181 is a substrate binding site. FAD contacts are provided by residues arginine 271, 281–284 (FQMN), arginine 340, alanine 344, and 367–371 (EGSAN). The active-site Proton acceptor is glutamate 367. Arginine 385 lines the substrate pocket.

It belongs to the acyl-CoA dehydrogenase family. In terms of assembly, homotetramer. Requires FAD as cofactor.

It catalyses the reaction glutaryl-CoA + A = (2E)-glutaconyl-CoA + AH2. The protein operates within aromatic compound metabolism; benzoyl-CoA degradation. With respect to regulation, inhibited by glutaconyl-CoA. Functionally, catalyzes the dehydrogenation of Glutaryl-CoA to glutaconyl-CoA. This is Glutaryl-CoA dehydrogenase (Acd) from Desulfococcus multivorans.